The following is a 778-amino-acid chain: IQ domain-containing protein E (778 aa).

2 disordered regions span residues 1–71 (MSLG…LSSR) and 83–108 (SSKQ…HPPS). Residues 37–49 (KPPSTSPKSPYYS) are compositionally biased toward low complexity. Over residues 83–101 (SSKQGSVAQPPSPTLTSEH) the composition is skewed to polar residues. Residues 157–323 (LHMQKSDVDL…DLDRMLSNSP (167 aa)) adopt a coiled-coil conformation. Ser322 bears the Phosphoserine mark. Disordered regions lie at residues 348–392 (KKVS…EDLP), 443–462 (ETAR…LREE), 474–529 (EEAK…SEER), and 573–612 (LVRS…AEEN). Residues 352 to 362 (SSESPKQSTSE) show a composition bias toward low complexity. Residues 398 to 486 (EEQEHLQGTV…KREEKNSFVA (89 aa)) adopt a coiled-coil conformation. IQ domains lie at 553–582 (LDEA…PDSR) and 615–644 (QEEA…REIA). Low complexity predominate over residues 581–598 (SRSPSLPGLLSPLNQSSP). Residues 651–662 (TVSLTPSGSASP) show a composition bias toward polar residues. The tract at residues 651–778 (TVSLTPSGSA…LPRKKSPSPF (128 aa)) is disordered. Ser661 is modified (phosphoserine). The segment covering 672 to 686 (IRKELCASEELRETS) has biased composition (basic and acidic residues). Over residues 739 to 752 (PSPPELQPLSPPPV) the composition is skewed to pro residues.

In terms of assembly, component of the EvC complex composed of EFCAB7, IQCE, EVC2 and EVC; built from two subcomplexes, EVC2:EVC and EFCAB7:IQCE. Interacts (via N-terminus) with EFCAB7 (via EF-hands 1 and 2); this interaction anchors the EVC-EVC2 complex in a signaling microdomain at the base of cilia and stimulates the Hedgehog (Hh) pathway. Interacts with EVC2 (via N-terminal end). Interacts with EVC.

It localises to the cell projection. It is found in the cilium membrane. Component of the EvC complex that positively regulates ciliary Hedgehog (Hh) signaling. Required for proper limb morphogenesis. The sequence is that of IQ domain-containing protein E (Iqce) from Mus musculus (Mouse).